A 177-amino-acid chain; its full sequence is Inner membrane-spanning protein YciB (177 aa).

5 helical membrane-spanning segments follow: residues 23-43, 50-70, 73-93, 119-139, and 149-169; these read MFVA…WAWF, TMQW…LLLH, HFIM…LLIS, LTWA…FVAY, and FKLF…SLFL.

It belongs to the YciB family.

It is found in the cell inner membrane. In terms of biological role, plays a role in cell envelope biogenesis, maintenance of cell envelope integrity and membrane homeostasis. This chain is Inner membrane-spanning protein YciB, found in Chromobacterium violaceum (strain ATCC 12472 / DSM 30191 / JCM 1249 / CCUG 213 / NBRC 12614 / NCIMB 9131 / NCTC 9757 / MK).